The chain runs to 210 residues: Protein GET1 (210 aa).

Residues 1–4 lie on the Lumenal side of the membrane; that stretch reads MPSL. A helical transmembrane segment spans residues 5–24; the sequence is LIIVLIIHVVTYLINTIGAN. Topologically, residues 25–110 are cytoplasmic; the sequence is TIDSLLWLLY…SFDLAVKSIR (86 aa). A coiled-coil region spans residues 39 to 95; it reads NQTSQTANEQRRLKREVMQLKREMNATSSQDEFAKWAKLRRRHDKTMEEYEAKNKAL. A helical membrane pass occupies residues 111–131; sequence FFSTTGLKLFLQFWCSKTPIF. The Lumenal portion of the chain corresponds to 132–155; sequence ELPRGWIPWQVEWVLSFPRAPLGT. Residues 156 to 172 form a helical membrane-spanning segment; it reads VSIQIWGGVCATVVSLA. The Cytoplasmic portion of the chain corresponds to 173-210; the sequence is GDAIGVVNVYLTSKAPKQKEPATSGENSARPMAIKKEL. Residues 189–210 are disordered; sequence KQKEPATSGENSARPMAIKKEL.

The protein belongs to the WRB/GET1 family. In terms of assembly, interacts with GET3.

It is found in the endoplasmic reticulum membrane. Its function is as follows. Required for the post-translational delivery of tail-anchored (TA) proteins to the endoplasmic reticulum. Acts as a membrane receptor for soluble GET3, which recognizes and selectively binds the transmembrane domain of TA proteins in the cytosol. The protein is Protein GET1 of Coccidioides immitis (strain RS) (Valley fever fungus).